Consider the following 284-residue polypeptide: 4-diphosphocytidyl-2-C-methyl-D-erythritol kinase (284 aa).

Lys14 is a catalytic residue. Residue Pro98–Ser108 coordinates ATP. Asp140 is an active-site residue.

This sequence belongs to the GHMP kinase family. IspE subfamily.

The enzyme catalyses 4-CDP-2-C-methyl-D-erythritol + ATP = 4-CDP-2-C-methyl-D-erythritol 2-phosphate + ADP + H(+). Its pathway is isoprenoid biosynthesis; isopentenyl diphosphate biosynthesis via DXP pathway; isopentenyl diphosphate from 1-deoxy-D-xylulose 5-phosphate: step 3/6. Functionally, catalyzes the phosphorylation of the position 2 hydroxy group of 4-diphosphocytidyl-2C-methyl-D-erythritol. This Shewanella baltica (strain OS195) protein is 4-diphosphocytidyl-2-C-methyl-D-erythritol kinase.